The following is a 367-amino-acid chain: Anhydro-N-acetylmuramic acid kinase (367 aa).

13–20 (GTSMDGAD) contributes to the ATP binding site.

Belongs to the anhydro-N-acetylmuramic acid kinase family.

It catalyses the reaction 1,6-anhydro-N-acetyl-beta-muramate + ATP + H2O = N-acetyl-D-muramate 6-phosphate + ADP + H(+). Its pathway is amino-sugar metabolism; 1,6-anhydro-N-acetylmuramate degradation. The protein operates within cell wall biogenesis; peptidoglycan recycling. In terms of biological role, catalyzes the specific phosphorylation of 1,6-anhydro-N-acetylmuramic acid (anhMurNAc) with the simultaneous cleavage of the 1,6-anhydro ring, generating MurNAc-6-P. Is required for the utilization of anhMurNAc either imported from the medium or derived from its own cell wall murein, and thus plays a role in cell wall recycling. The sequence is that of Anhydro-N-acetylmuramic acid kinase from Neisseria meningitidis serogroup B (strain ATCC BAA-335 / MC58).